The primary structure comprises 565 residues: DNA ligase B (565 aa).

The active-site N6-AMP-lysine intermediate is the Lys-130.

This sequence belongs to the NAD-dependent DNA ligase family. LigB subfamily.

The catalysed reaction is NAD(+) + (deoxyribonucleotide)n-3'-hydroxyl + 5'-phospho-(deoxyribonucleotide)m = (deoxyribonucleotide)n+m + AMP + beta-nicotinamide D-nucleotide.. Functionally, catalyzes the formation of phosphodiester linkages between 5'-phosphoryl and 3'-hydroxyl groups in double-stranded DNA using NAD as a coenzyme and as the energy source for the reaction. The sequence is that of DNA ligase B from Yersinia enterocolitica serotype O:8 / biotype 1B (strain NCTC 13174 / 8081).